Reading from the N-terminus, the 191-residue chain is Protein GrpE (191 aa).

It belongs to the GrpE family. In terms of assembly, homodimer.

It is found in the cytoplasm. Participates actively in the response to hyperosmotic and heat shock by preventing the aggregation of stress-denatured proteins, in association with DnaK and GrpE. It is the nucleotide exchange factor for DnaK and may function as a thermosensor. Unfolded proteins bind initially to DnaJ; upon interaction with the DnaJ-bound protein, DnaK hydrolyzes its bound ATP, resulting in the formation of a stable complex. GrpE releases ADP from DnaK; ATP binding to DnaK triggers the release of the substrate protein, thus completing the reaction cycle. Several rounds of ATP-dependent interactions between DnaJ, DnaK and GrpE are required for fully efficient folding. In Helicobacter pylori (strain P12), this protein is Protein GrpE.